The sequence spans 159 residues: MRCPFCRHEDTQVVDSRVSEDGAAIRRRRRCSACDKRFTTYERVELNLPAVVKKDGSRTEFDRRKIVASMQLALRKRPVAADAIDAAVARIEYQLLATGEREVRSEKLGELVMNELRGLDTIAYVRFASVYRRFEDVSEFADVIEEFRRASPAKPPRKR.

The segment at 3–34 (CPFCRHEDTQVVDSRVSEDGAAIRRRRRCSAC) is a zinc-finger region. The region spanning 49-139 (PAVVKKDGSR…VYRRFEDVSE (91 aa)) is the ATP-cone domain.

The protein belongs to the NrdR family. Requires Zn(2+) as cofactor.

In terms of biological role, negatively regulates transcription of bacterial ribonucleotide reductase nrd genes and operons by binding to NrdR-boxes. This chain is Transcriptional repressor NrdR, found in Burkholderia multivorans (strain ATCC 17616 / 249).